Here is a 154-residue protein sequence, read N- to C-terminus: Iron sulfur cluster assembly protein 1, mitochondrial (154 aa).

This sequence belongs to the NifU family. In terms of assembly, component of the core Fe-S cluster (ISC) assembly machinery. [2Fe-2S] cluster serves as cofactor.

Its subcellular location is the mitochondrion matrix. It participates in cofactor biosynthesis; iron-sulfur cluster biosynthesis. Scaffold protein for the de novo synthesis of iron-sulfur (Fe-S) clusters within mitochondria, which is required for maturation of both mitochondrial and cytoplasmic [2Fe-2S] and [4Fe-4S] proteins. First, a [2Fe-2S] cluster is transiently assembled on the scaffold protein ISU1. In a second step, the cluster is released from ISU1, transferred to a glutaredoxin, followed by the formation of mitochondrial [2Fe-2S] proteins, the synthesis of [4Fe-4S] clusters and their target-specific insertion into the recipient apoproteins. Cluster assembly on ISU1 depends on the function of the cysteine desulfurase complex NFS1-ISD11, which serves as the sulfur donor for cluster synthesis, the iron-binding protein frataxin as the putative iron donor, and the electron transfer chain comprised of ferredoxin reductase and ferredoxin, which receive their electrons from NADH. The polypeptide is Iron sulfur cluster assembly protein 1, mitochondrial (ISU1) (Eremothecium gossypii (strain ATCC 10895 / CBS 109.51 / FGSC 9923 / NRRL Y-1056) (Yeast)).